The sequence spans 84 residues: U21-theraphotoxin-Cg1b (84 aa).

Residues 1–21 form the signal peptide; it reads MKVSVLITLAVLGVMFLLTSA. The propeptide occupies 22–47; that stretch reads EERGSDQMDSPAWLKSMERIFQSEER. 3 cysteine pairs are disulfide-bonded: C49–C63, C56–C68, and C62–C76. Position 82 is a phenylalanine amide (F82).

It belongs to the neurotoxin 10 (Hwtx-1) family. 05 (F4a) subfamily. In terms of tissue distribution, expressed by the venom gland.

The protein localises to the secreted. Probable ion channel inhibitor. The protein is U21-theraphotoxin-Cg1b of Chilobrachys guangxiensis (Chinese earth tiger tarantula).